Reading from the N-terminus, the 351-residue chain is MIENLLREEIKGFKNYEVENVPYKYKMDANETPFELPEEVMKNIGDIVKSIHVNIYPDPTAEKLREELARYCSVTPKNIFVGNGSDEIIHLIMLAFVDKGDTVLYPHPSFAMYSIYSKIAGANEIAVNLNEDYTYNVERFAEAVERYKPKLVFLCNPNNPTGSVIDEEDIIRIIEKARGIVIVDEAYFEFYGKTLVPYIDRFENLIVLRTLSKAFGIAGLRVGYALSNGEIVKYLNLVKSPYNLNSLSQRIALEVLKSGVLKERVNYIINEREKLVKELNKINGIKVYPSHANFVLCKFENANDVHKRLVERGILVRNFSNVKGLEGTLRITVSSSDANDYLINALREILS.

Residue lysine 213 is modified to N6-(pyridoxal phosphate)lysine.

Belongs to the class-II pyridoxal-phosphate-dependent aminotransferase family. Histidinol-phosphate aminotransferase subfamily. In terms of assembly, homodimer. It depends on pyridoxal 5'-phosphate as a cofactor.

It catalyses the reaction L-histidinol phosphate + 2-oxoglutarate = 3-(imidazol-4-yl)-2-oxopropyl phosphate + L-glutamate. The catalysed reaction is L-histidine + 2-oxoglutarate = 3-(imidazol-5-yl)pyruvate + L-glutamate. Its pathway is amino-acid biosynthesis; L-histidine biosynthesis; L-histidine from 5-phospho-alpha-D-ribose 1-diphosphate: step 7/9. This Caldanaerobacter subterraneus subsp. tengcongensis (strain DSM 15242 / JCM 11007 / NBRC 100824 / MB4) (Thermoanaerobacter tengcongensis) protein is Histidinol-phosphate aminotransferase.